The following is a 109-amino-acid chain: MSEFKRISPEQALALRAEGAVVVDIRDPQAYAAGHITGATHLDNHSVADFIRNADLDAPTLVVCYHGNSSQSAAAYLVGQGFSNVYSIDGGFELWRSTYPGETAQGNAE.

Residues 16–104 (RAEGAVVVDI…WRSTYPGETA (89 aa)) enclose the Rhodanese domain. Cys-64 functions as the Cysteine persulfide intermediate in the catalytic mechanism.

It belongs to the GlpE family.

The protein resides in the cytoplasm. The enzyme catalyses thiosulfate + hydrogen cyanide = thiocyanate + sulfite + 2 H(+). The catalysed reaction is thiosulfate + [thioredoxin]-dithiol = [thioredoxin]-disulfide + hydrogen sulfide + sulfite + 2 H(+). Its function is as follows. Transferase that catalyzes the transfer of sulfur from thiosulfate to thiophilic acceptors such as cyanide or dithiols. May function in a CysM-independent thiosulfate assimilation pathway by catalyzing the conversion of thiosulfate to sulfite, which can then be used for L-cysteine biosynthesis. In Pseudomonas entomophila (strain L48), this protein is Thiosulfate sulfurtransferase GlpE.